The following is a 218-amino-acid chain: N-alpha-acetyltransferase 11 (218 aa).

The tract at residues 1-58 (MNIRNARPDDLMNMQHCNLLCLPENYQMKYYFYHGLSWPQLSYIAEDEDGKIVGYVLA) is interaction with NAA15. An N-acetyltransferase domain is found at 1-152 (MNIRNARPDD…DAYAMKRDLS (152 aa)). The interval 175 to 218 (EETQGGTLPDAGEACLPKNPTSKDSGSSDSTDVQDSSEDLDSIS) is disordered. Over residues 196 to 205 (SKDSGSSDST) the composition is skewed to low complexity. Residues 209–218 (DSSEDLDSIS) show a composition bias toward acidic residues.

Belongs to the acetyltransferase family. ARD1 subfamily. As to quaternary structure, component of the N-terminal acetyltransferase A (NatA) complex composed of NAA11 and NAA15. Interacts with HIF1A.

The protein resides in the cytoplasm. The protein localises to the nucleus. The enzyme catalyses N-terminal glycyl-[protein] + acetyl-CoA = N-terminal N(alpha)-acetylglycyl-[protein] + CoA + H(+). It carries out the reaction N-terminal L-alanyl-[protein] + acetyl-CoA = N-terminal N(alpha)-acetyl-L-alanyl-[protein] + CoA + H(+). The catalysed reaction is N-terminal L-seryl-[protein] + acetyl-CoA = N-terminal N(alpha)-acetyl-L-seryl-[protein] + CoA + H(+). It catalyses the reaction N-terminal L-valyl-[protein] + acetyl-CoA = N-terminal N(alpha)-acetyl-L-valyl-[protein] + CoA + H(+). The enzyme catalyses N-terminal L-cysteinyl-[protein] + acetyl-CoA = N-terminal N(alpha)-acetyl-L-cysteinyl-[protein] + CoA + H(+). It carries out the reaction N-terminal L-threonyl-[protein] + acetyl-CoA = N-terminal N(alpha)-acetyl-L-threonyl-[protein] + CoA + H(+). Displays alpha (N-terminal) acetyltransferase activity. Proposed alternative catalytic subunit of the N-terminal acetyltransferase A (NatA) complex. In Mus musculus (Mouse), this protein is N-alpha-acetyltransferase 11 (Naa11).